The chain runs to 238 residues: Ribonuclease PH (238 aa).

Phosphate contacts are provided by residues R86 and 124-126 (GTR).

The protein belongs to the RNase PH family. In terms of assembly, homohexameric ring arranged as a trimer of dimers.

It carries out the reaction tRNA(n+1) + phosphate = tRNA(n) + a ribonucleoside 5'-diphosphate. In terms of biological role, phosphorolytic 3'-5' exoribonuclease that plays an important role in tRNA 3'-end maturation. Removes nucleotide residues following the 3'-CCA terminus of tRNAs; can also add nucleotides to the ends of RNA molecules by using nucleoside diphosphates as substrates, but this may not be physiologically important. Probably plays a role in initiation of 16S rRNA degradation (leading to ribosome degradation) during starvation. The polypeptide is Ribonuclease PH (Shigella flexneri serotype 5b (strain 8401)).